The chain runs to 840 residues: Translation initiation factor IF-2 (840 aa).

Residues 95–143 (RSPDEIEAERQRELEEQRAAEEAERLKAEEAAARQRAEEEARKAEEAAR) show a composition bias toward basic and acidic residues. Disordered regions lie at residues 95-155 (RSPD…ATAG) and 173-256 (PAAV…PTGP). Residues 144–155 (AKAAQEAAATAG) are compositionally biased toward low complexity. Basic and acidic residues-rich tracts occupy residues 175–191 (AVEE…PKRD) and 223–232 (STDEESDGYR). Over residues 233 to 247 (RGGRGGKSKLKKRNQ) the composition is skewed to basic residues. One can recognise a tr-type G domain in the interval 340–509 (TRAPVVTVMG…LLQAEVLELK (170 aa)). The G1 stretch occupies residues 349–356 (GHVDHGKT). 349 to 356 (GHVDHGKT) contacts GTP. Residues 374–378 (GITQH) form a G2 region. Residues 395–398 (DTPG) are G3. GTP-binding positions include 395 to 399 (DTPGH) and 449 to 452 (NKID). Residues 449–452 (NKID) form a G4 region. The tract at residues 485–487 (SAK) is G5.

Belongs to the TRAFAC class translation factor GTPase superfamily. Classic translation factor GTPase family. IF-2 subfamily.

It is found in the cytoplasm. One of the essential components for the initiation of protein synthesis. Protects formylmethionyl-tRNA from spontaneous hydrolysis and promotes its binding to the 30S ribosomal subunits. Also involved in the hydrolysis of GTP during the formation of the 70S ribosomal complex. This is Translation initiation factor IF-2 from Pseudomonas aeruginosa (strain ATCC 15692 / DSM 22644 / CIP 104116 / JCM 14847 / LMG 12228 / 1C / PRS 101 / PAO1).